We begin with the raw amino-acid sequence, 1209 residues long: 3',5'-cyclic-AMP phosphodiesterase, isoform I (1209 aa).

Disordered stretches follow at residues 16–35, 59–82, 275–353, 372–403, 442–498, 626–655, and 754–792; these read NVAK…GSGT, GGGS…KRKS, LYSG…PLPP, SATS…SPRI, ETLA…MQAE, VPAS…LSQG, and SAGQ…RLPT. 2 stretches are compositionally biased toward gly residues: residues 25 to 35 and 59 to 77; these read SSNGTGNGSGT and GGGS…GSGS. Polar residues predominate over residues 275–290; sequence LYSGSNPSTNPCQSAV. Low complexity predominate over residues 291-314; the sequence is QNQGQNSNPNPNQNPNTNPNQNQQ. Residues 315 to 324 are compositionally biased toward polar residues; sequence RCSCQPQTSP. Residues 372-383 are compositionally biased toward low complexity; the sequence is SATSSSAGTVPP. Residues 385-400 show a composition bias toward polar residues; sequence GQQTQEYIAGTSSTPS. Composition is skewed to low complexity over residues 445–462 and 472–483; these read ASSS…NSSS and TSSSASALATSH. Polar residues-rich tracts occupy residues 484-498 and 627-645; these read PSNS…MQAE and PASN…SRSG. Residues 795–1124 form the PDEase domain; that stretch reads VETPRENELG…DYYQSMIPPS (330 aa). H871 functions as the Proton donor in the catalytic mechanism. 871 to 875 serves as a coordination point for 3',5'-cyclic AMP; the sequence is HNSLH. Residues H875, H911, D912, and D1029 each contribute to the a divalent metal cation site. Positions 912, 1029, and 1080 each coordinate 3',5'-cyclic AMP. Residues 1146 to 1163 are compositionally biased toward acidic residues; it reads EESDQENLAELEEGDESG. The disordered stretch occupies residues 1146-1209; that stretch reads EESDQENLAE…CQNQPQHGGM (64 aa). Residues 1164–1181 show a composition bias toward low complexity; that stretch reads GESTTTGTTGTTAASALS. Gly residues predominate over residues 1182 to 1193; the sequence is GAGGGGGGGGGM. Residues 1199 to 1209 are compositionally biased toward polar residues; sequence GCQNQPQHGGM.

The protein belongs to the cyclic nucleotide phosphodiesterase family. PDE4 subfamily. As to quaternary structure, monomer. A divalent metal cation is required as a cofactor.

The enzyme catalyses 3',5'-cyclic AMP + H2O = AMP + H(+). It functions in the pathway purine metabolism; 3',5'-cyclic AMP degradation; AMP from 3',5'-cyclic AMP: step 1/1. Functionally, hydrolyzes the second messenger cAMP, which is a key regulator of many important physiological processes. Vital for female fertility. Required for learning/memory. This Drosophila melanogaster (Fruit fly) protein is 3',5'-cyclic-AMP phosphodiesterase, isoform I.